An 89-amino-acid polypeptide reads, in one-letter code: GVWLAVLAFALLPVLGVGQYTIQWPGTWCFISTGPGGNGTNSRQNWGNVFFASDFAILGLSALVVTFACNLATIKALVSRCRAKATASQ.

Residues 1–18 (GVWLAVLAFALLPVLGVG) form a helical membrane-spanning segment. At 19–48 (QYTIQWPGTWCFISTGPGGNGTNSRQNWGN) the chain is on the extracellular side. N38 is a glycosylation site (N-linked (GlcNAc...) asparagine). The chain crosses the membrane as a helical span at residues 49–74 (VFFASDFAILGLSALVVTFACNLATI). The Cytoplasmic segment spans residues 75 to 89 (KALVSRCRAKATASQ).

Belongs to the G-protein coupled receptor 1 family. Interacts (via C-terminus) with MKLN1.

Its subcellular location is the cell membrane. Functionally, receptor for prostaglandin E2 (PGE2). Required for normal development of fever in response to pyrinogens, including IL1B, prostaglandin E2 and bacterial lipopolysaccharide (LPS). Required for normal potentiation of platelet aggregation by prostaglandin E2, and thus plays a role in the regulation of blood coagulation. Required for increased HCO3(-) secretion in the duodenum in response to mucosal acidification, and thereby contributes to the protection of the mucosa against acid-induced ulceration. Not required for normal kidney function, normal urine volume and osmolality. The polypeptide is Prostaglandin E2 receptor EP3 subtype (PTGER3) (Ovis aries (Sheep)).